We begin with the raw amino-acid sequence, 181 residues long: MKQILDFIPLIIFFALYKMYDIYTATGALIVATAVQLILTYVLYKKVEKMQLITFIMVTVFGGMTIFLHDDNFIKWKVTIVYAVFAAGLIIAQILGRPIIKGMLGKEVTLPDNKWNKINYAWILFFTACSIANLYVAFEMPLDVWVNFKVFGLLGLTFIYTLLTGMYVYKHMPKEKKEEQE.

The next 5 membrane-spanning stretches (helical) occupy residues 22–42 (IYTA…LTYV), 50–70 (MQLI…FLHD), 80–100 (IVYA…RPII), 118–138 (INYA…YVAF), and 148–168 (FKVF…GMYV).

The protein belongs to the YciB family.

The protein localises to the cell inner membrane. Its function is as follows. Plays a role in cell envelope biogenesis, maintenance of cell envelope integrity and membrane homeostasis. The protein is Inner membrane-spanning protein YciB of Aliivibrio salmonicida (strain LFI1238) (Vibrio salmonicida (strain LFI1238)).